The primary structure comprises 119 residues: Beta-2-microglobulin (119 aa).

The signal sequence occupies residues methionine 1–alanine 20. The Ig-like C1-type domain occupies proline 25–lysine 114. A disulfide bridge links cysteine 45 with cysteine 100.

It belongs to the beta-2-microglobulin family. Heterodimer of an alpha chain and a beta chain. Beta-2-microglobulin is the beta-chain of major histocompatibility complex class I molecules.

It is found in the secreted. Component of the class I major histocompatibility complex (MHC). Involved in the presentation of peptide antigens to the immune system. The protein is Beta-2-microglobulin (B2M) of Mico emiliae (Emilia's marmoset).